The primary structure comprises 65 residues: Myosin-11 (65 aa).

Residues 1 to 65 (RSGKLDAFLV…NWQWWRLFTK (65 aa)) enclose the Myosin motor domain.

Belongs to the TRAFAC class myosin-kinesin ATPase superfamily. Myosin family. As to quaternary structure, muscle myosin is a hexameric protein that consists of 2 heavy chain subunits (MHC), 2 alkali light chain subunits (MLC) and 2 regulatory light chain subunits (MLC-2).

Its subcellular location is the melanosome. The protein resides in the cytoplasm. It localises to the myofibril. In terms of biological role, muscle contraction. The chain is Myosin-11 (MYH11) from Sus scrofa (Pig).